The following is an 829-amino-acid chain: MMLLGSPSSGGYGGKFAGASPAGGTTTMAPSAKQPSSRAPPPGITGGRNDLRILSPAAAAAAVGGLEMKKPEAEGIAESLQATHRKELEASIRKQLQGVELSPSPYDTAWVAMVPLRGSSHNPSFPQCVDWILENQWDDGSWSIDGSISTANKDVLSSTLACVLALNKWNVGREHIRRGLSFIGRNFSIAMDDQAVAPIGFGITFPAMLTLANGSGLEVPVRQNDIDSLNHLREMKIQREAGNHSRGRKAYMAYLAEGFGNLLEWDEIMMFQRKNGSLFNCPSSTAGALANYHDDKALQYLQSLVNKFDGVVPTLYPLNIYCQLSMVDALENMGISQYFASEIKSILDMTYSSWLGKDEEIMLDVTTCAMAFRLLRMNGYDVSSDELSHVAGASGFRDSLQGYLNDRKSVLEVYKTSKHSISENDLILDSIGSWSGSLLKEMLCSNGKGTPGREEIEFALKYPFYSTLERLVHRKNIVLFDAKGSQMLKTECMPVHDSQDFLALAVDDFCISQSNYQNELNYLESWVKDNRLDQLHFARQKITYCYLSGAATTFRPEMGYARTSWARTAWLTAVIDDLFDVGGLEQEQENLLALMEKWEEPGEDEYYSEDVKIVFQALYNTVNEIGAKASALQGHDVTKYLVDVWLHVVRCMKVEAEWQRSQHLPTFEEYMESGMVSLGQGCTVMSALFLIGEKLPEGIVELEEYDELFRLMGTCGRLLNDIRGIEREESDGKMTNGVSLLVHASGGSMSVDEAKTEVMKRIDASRRKLLSLVVSEQEGPIPRPCKQLFWKMCKILHLFYYQTDGFSSPKEMVSAVDAVINEPLQLRLL.

The tract at residues 1 to 50 (MMLLGSPSSGGYGGKFAGASPAGGTTTMAPSAKQPSSRAPPPGITGGRND) is disordered. Residues 23–37 (GGTTTMAPSAKQPSS) show a composition bias toward polar residues. Asp-576, Asp-580, Asn-720, and Glu-728 together coordinate Mg(2+). Residues 576 to 580 (DDLFD) carry the DDXXD motif motif.

Belongs to the terpene synthase family. Mg(2+) is required as a cofactor. Expressed in roots and stems.

The catalysed reaction is ent-copalyl diphosphate = ent-cassa-12,15-diene + diphosphate. Its function is as follows. Involved in phytocassane phytoalexins biosynthesis. Catalyzes the conversion of ent-copalyl diphosphate to the phytoalexin precursor ent-cassa-12,15-diene. This chain is Ent-cassa-12,15-diene synthase (KSL7), found in Oryza sativa subsp. japonica (Rice).